The chain runs to 210 residues: Frataxin, mitochondrial (210 aa).

A mitochondrion-targeting transit peptide spans Met1–Gly41.

It belongs to the frataxin family. In terms of assembly, component of the mitochondrial core iron-sulfur cluster (ISC) complex composed of NFS1, LYRM4, NDUFAB1, ISCU, FXN, and FDX2; this complex is a heterohexamer containing two copies of each monomer. Homodimer. Monomer (probable predominant form). Oligomer. Monomers and polymeric aggregates of &gt;1 MDa have been isolated from mitochondria. A small fraction of heterologous overexpressed recombinant frataxin forms high-molecular weight aggregates that incorporate iron. Interacts with LYRM4. Interacts (via ferrous form) with ISCU; the interaction is possible when both are bound to the dimeric form of the cysteine desulfurase complex (NFS1:LYRM4) and the interaction enhances FXN interaction to the dimeric form of the cysteine desulfurase complex (NFS1:LYRM4). Interacts with FECH; one iron-bound FXN monomer seems to interact with a FECH homodimer. Interacts with SDHA and SDHB. Interacts with ACO2; the interaction is dependent on citrate. Interacts with HSPA9. Interacts with ACO1. Interacts with ISCU (cytoplasmic form). Post-translationally, processed in two steps by mitochondrial processing peptidase (MPP). MPP first cleaves the precursor to intermediate form and subsequently converts the intermediate to yield frataxin mature form (frataxin(81-210)) which is the predominant form. The additional forms, frataxin(56-210) and frataxin(78-210), seem to be produced when the normal maturation process is impaired; their physiological relevance is unsure.

Its subcellular location is the mitochondrion. It is found in the cytoplasm. It localises to the cytosol. It carries out the reaction 4 Fe(2+) + O2 + 4 H(+) = 4 Fe(3+) + 2 H2O. Its function is as follows. Functions as an activator of persulfide transfer to the scaffoding protein ISCU as component of the core iron-sulfur cluster (ISC) assembly complex and participates to the [2Fe-2S] cluster assembly. Accelerates sulfur transfer from NFS1 persulfide intermediate to ISCU and to small thiols such as L-cysteine and glutathione leading to persulfuration of these thiols and ultimately sulfide release. Binds ferrous ion and is released from FXN upon the addition of both L-cysteine and reduced FDX2 during [2Fe-2S] cluster assembly. The core iron-sulfur cluster (ISC) assembly complex is involved in the de novo synthesis of a [2Fe-2S] cluster, the first step of the mitochondrial iron-sulfur protein biogenesis. This process is initiated by the cysteine desulfurase complex (NFS1:LYRM4:NDUFAB1) that produces persulfide which is delivered on the scaffold protein ISCU in a FXN-dependent manner. Then this complex is stabilized by FDX2 which provides reducing equivalents to accomplish the [2Fe-2S] cluster assembly. Finally, the [2Fe-2S] cluster is transferred from ISCU to chaperone proteins, including HSCB, HSPA9 and GLRX5. May play a role in the protection against iron-catalyzed oxidative stress through its ability to catalyze the oxidation of Fe(2+) to Fe(3+); the oligomeric form but not the monomeric form has in vitro ferroxidase activity. May be able to store large amounts of iron in the form of a ferrihydrite mineral by oligomerization; however, the physiological relevance is unsure as reports are conflicting and the function has only been shown using heterologous overexpression systems. May function as an iron chaperone protein that protects the aconitase [4Fe-4S]2+ cluster from disassembly and promotes enzyme reactivation. May play a role as a high affinity iron binding partner for FECH that is capable of both delivering iron to ferrochelatase and mediating the terminal step in mitochondrial heme biosynthesis. In terms of biological role, modulates the RNA-binding activity of ACO1. May be involved in the cytoplasmic iron-sulfur protein biogenesis. May contribute to oxidative stress resistance and overall cell survival. This Macaca fascicularis (Crab-eating macaque) protein is Frataxin, mitochondrial.